Here is a 96-residue protein sequence, read N- to C-terminus: Co-chaperonin GroES (96 aa).

Belongs to the GroES chaperonin family. As to quaternary structure, heptamer of 7 subunits arranged in a ring. Interacts with the chaperonin GroEL.

The protein localises to the cytoplasm. In terms of biological role, together with the chaperonin GroEL, plays an essential role in assisting protein folding. The GroEL-GroES system forms a nano-cage that allows encapsulation of the non-native substrate proteins and provides a physical environment optimized to promote and accelerate protein folding. GroES binds to the apical surface of the GroEL ring, thereby capping the opening of the GroEL channel. This Acinetobacter baylyi (strain ATCC 33305 / BD413 / ADP1) protein is Co-chaperonin GroES.